The following is a 240-amino-acid chain: UDP-2,3-diacylglucosamine hydrolase (240 aa).

5 residues coordinate Mn(2+): Asp-8, His-10, Asp-41, Asn-79, and His-114. 79–80 (NR) contacts substrate. 5 residues coordinate substrate: Asp-122, Ser-160, Asn-164, Lys-167, and His-195. 2 residues coordinate Mn(2+): His-195 and His-197.

This sequence belongs to the LpxH family. Mn(2+) serves as cofactor.

It is found in the cell inner membrane. It catalyses the reaction UDP-2-N,3-O-bis[(3R)-3-hydroxytetradecanoyl]-alpha-D-glucosamine + H2O = 2-N,3-O-bis[(3R)-3-hydroxytetradecanoyl]-alpha-D-glucosaminyl 1-phosphate + UMP + 2 H(+). The protein operates within glycolipid biosynthesis; lipid IV(A) biosynthesis; lipid IV(A) from (3R)-3-hydroxytetradecanoyl-[acyl-carrier-protein] and UDP-N-acetyl-alpha-D-glucosamine: step 4/6. Functionally, hydrolyzes the pyrophosphate bond of UDP-2,3-diacylglucosamine to yield 2,3-diacylglucosamine 1-phosphate (lipid X) and UMP by catalyzing the attack of water at the alpha-P atom. Involved in the biosynthesis of lipid A, a phosphorylated glycolipid that anchors the lipopolysaccharide to the outer membrane of the cell. The sequence is that of UDP-2,3-diacylglucosamine hydrolase from Salmonella paratyphi A (strain ATCC 9150 / SARB42).